We begin with the raw amino-acid sequence, 1045 residues long: Protein madd-4 (1045 aa).

An N-terminal signal peptide occupies residues 1–23; that stretch reads MKCSYTVVFLLFYLLIASFHVDA. 5 consecutive TSP type-1 domains span residues 24-71, 236-292, 294-510, 512-572, and 576-635; these read LSWA…KTCE, RCRW…NCVS, SCGR…HPCP, FWLT…NVVA, and TWVT…GSCS. Intrachain disulfides connect Cys-35/Cys-65, Cys-39/Cys-70, and Cys-50/Cys-55. N-linked (GlcNAc...) asparagine glycans are attached at residues Asn-268 and Asn-280. The Ig-like C2-type domain occupies 637-732; sequence PELLSNRVFE…FTDRLQGNVT (96 aa). Cys-674 and Cys-722 are joined by a disulfide. Residues Asn-730 and Asn-781 are each glycosylated (N-linked (GlcNAc...) asparagine). Residues 811–873 enclose the TSP type-1 6 domain; the sequence is RWDIGHWSEC…TRPCHREDCP (63 aa). N-linked (GlcNAc...) asparagine glycosylation is found at Asn-899 and Asn-906. In terms of domain architecture, TSP type-1 7 spans 932-990; sequence CKAEWRTSDWGSCSSECGTGGVQLRLLSCVWISSGRPAGRNCEQMRRPHSARACVADEP. Positions 1004–1041 constitute a PLAC domain; sequence RDASCQDQSRFCDIIKLFHSCDSLEVRQKCCSTCTFVE.

As to quaternary structure, interacts with eva-1 (via the SUEL-type lectin domain). Interacts with unc-5. Interacts with unc-40; the interaction is required for the localization of unc-40 to postsynaptic domains. Isoform a forms homodimers and heterodimers with isoform b. Isoform b forms homodimers and heterodimers with isoform a. Isoform b interacts with nlg-1 (via extracellular domain); the interaction is required for nlg-1 localization to postsynaptic domains. Isoform b interacts (via the Ig-like C2-type domain) with nrx-1 (via C-terminus). As to expression, isoform a: Expressed in the commissural GABAergic and cholinergic motor neurons in the first larval stage but only in the cholinergic motor neurons in later larval stages and in adult animals. At the L1 larval stage, mainly localized at the nerve ring and at the dorsal cord. Isoform b: Expressed in the commissural GABAergic and cholinergic motor neurons whose cell bodies reside in the ventral nerve cord and which extend axons into the ventral and dorsal nerve cord. Also expressed in the head neurons RIA, RIC, lateral IL1s, lateral IL2s, OLLs, RMEs and SABs, all of which extend axons into the nerve ring. Expressed in the embryogenic blast cells and the corresponding terminally differentiated ventral cord motor neurons and head neurons.

It is found in the cell projection. The protein resides in the axon. The protein localises to the secreted. Its subcellular location is the synapse. It localises to the extracellular space. It is found in the extracellular matrix. In terms of biological role, component of an extracellular matrix cue that is involved in the guidance of dorsoventral midline migrations and in the specification of postsynaptic domains at neuromuscular junctions (NMJs). Acts as a ligand for the netrin receptor unc-40 and the neuroligin receptor nlg-1. Secreted by the dorsal and ventral nerve cords to attract sensory axons and muscle membrane extensions called muscle arms. In parallel with unc-6 and slt-1, involved in the netrin receptor unc-40 dependent guidance of the AVM and PVM mechanosensory axons along the dorsal-ventral axis. The unc-40 coreceptor eva-1 is enhancing the responsiveness of unc-40 to the madd-4 guidance cue to attract the muscle arm extensions and AVM mechanosensory axons towards the dorsoventral midline. Acts as a synaptic organizer and is required for the specification of inhibitory GABAergic and excitatory cholinergic identities of postsynaptic domains at neuromuscular junctions (NMJs). Required for the recruitment of unc-40 to both cholinergic and GABAergic NMJs. Promotes the clustering of ACh receptors and GABA(A) receptors at postsynaptic sites during synaptogenesis. The binding to the presynaptic adhesion protein nrx-1 and to the neuroligin nlg-1 at postsynaptic sites promotes clustering of GABAergic receptors at postsynaptic NMJs, thereby contributing to normal GABAergic synaptic transmission. Functionally, isoform a and isoform c: Promotes the clustering of acetylcholine receptors (AChR) at excitatory cholinergic synapses of NMJs via the netrin receptor unc-40. Acts as a guidance cue in the attraction of muscle membrane extensions (muscle arms) to the dorsal cord and in cooperation with unc-6 to the ventral cord via the netrin receptor unc-40 and via the unc-40 coreceptor eva-1. Together with nrx-1, clusters netrin receptor unc-40 and neuroligin nlg-1 at postsynaptic sites of GABAergic NMJs, thereby promoting the recruitment of GABA(A) receptors at GABAergic synapses. Prevents the recruitment of GABAergic receptors to cholinergic synapses. This is Protein madd-4 from Caenorhabditis elegans.